The sequence spans 743 residues: MSSDSRPPQPDTSTQSNSESESPAISSPTPQDHAPMTNRDWWPNQIDVSMLHPHPSQASPLGADFDYPKEFAKLDVDALKADVMSVMTTSQDWWPADYGHYGGLFIRMSWHAAGTYRIQDGRGGGGQGMQRFAPLNSWPDNVSLDKARRLLWPVKQKYGSEISWADLIIFAGNCALDSMGFKTFGFGFGREDVWQPEEVMWGEEDVWLGTDKRYSGKRDLAQPYGATTMGLIYVNPEGPEGKPDPVAAAHDIRETFARMAMNDEETAALIVGGHSFGKTHGAGDADLVGPEPEAAPIEQQGFGWKSSFGSGKGKDAITSGLEVVWTPTPTQWGNGFLELLYGYEWELTKSPAGAWQFTAKDGAGAGTIPDPFGGPGRAPTMLVTDISMREDPIYRRITQRWLEHPEELTEAFAKAWYKLLHRDMGPVSRYLGPWVAEPQLWQDPVPDVDHELVDAKDVAALKSKVLASGLTVAQLVKTAWSAASSFRRTDKRGGANGGRLRLEPQKSWESNEPADLDQVLSVLEGIQQDFNSSAAGGKKISLADLIVLAGSAAVEKAAKDGGHEVSVPFSPGRTDASQENTDVESFAVLEPRADGFRNYVRVGEKAPLEHLLIERAYRLGVTAPEMTVLVGGLRALGANHGGSEHGVFTDKPGVLSNDFFVNLLDMGTEWKASDAAENVYEGCDRSSGQLKWTATANDLVFGSNSVLRALAEVYAQSDAKQKFAEDFAAAWAKVMNNDRFDLE.

Residues 1–15 show a composition bias toward polar residues; the sequence is MSSDSRPPQPDTSTQ. A disordered region spans residues 1–40; that stretch reads MSSDSRPPQPDTSTQSNSESESPAISSPTPQDHAPMTNRD. Residues 16–28 are compositionally biased toward low complexity; the sequence is SNSESESPAISSP. Positions 110-233 form a cross-link, tryptophyl-tyrosyl-methioninium (Trp-Tyr) (with M-259); it reads WHAAGTYRIQ…YGATTMGLIY (124 aa). The active-site Proton acceptor is the His-111. The segment at residues 233-259 is a cross-link (tryptophyl-tyrosyl-methioninium (Tyr-Met) (with W-110)); it reads YVNPEGPEGKPDPVAAAHDIRETFARM. Residue His-274 participates in heme b binding. A disordered region spans residues 490-511; it reads DKRGGANGGRLRLEPQKSWESN.

The protein belongs to the peroxidase family. Peroxidase/catalase subfamily. Homodimer or homotetramer. The cofactor is heme b. Post-translationally, formation of the three residue Trp-Tyr-Met cross-link is important for the catalase, but not the peroxidase activity of the enzyme.

It catalyses the reaction H2O2 + AH2 = A + 2 H2O. The catalysed reaction is 2 H2O2 = O2 + 2 H2O. Functionally, bifunctional enzyme with both catalase and broad-spectrum peroxidase activity. This is Catalase-peroxidase from Mycobacterium ulcerans (strain Agy99).